The primary structure comprises 230 residues: ATP synthase subunit a (230 aa).

6 helical membrane-spanning segments follow: residues 16–36 (LVLF…WLSI), 73–93 (WVSA…LGLL), 106–126 (TYSI…YLAF), 142–162 (LIPF…IALG), 165–185 (LAAN…AIWT), and 192–212 (IASI…GVAC).

The protein belongs to the ATPase A chain family. In terms of assembly, F-type ATPases have 2 components, CF(1) - the catalytic core - and CF(0) - the membrane proton channel. CF(1) has five subunits: alpha(3), beta(3), gamma(1), delta(1), epsilon(1). CF(0) has three main subunits: a, b and c.

The protein resides in the mitochondrion inner membrane. Mitochondrial membrane ATP synthase (F(1)F(0) ATP synthase or Complex V) produces ATP from ADP in the presence of a proton gradient across the membrane which is generated by electron transport complexes of the respiratory chain. F-type ATPases consist of two structural domains, F(1) - containing the extramembraneous catalytic core and F(0) - containing the membrane proton channel, linked together by a central stalk and a peripheral stalk. During catalysis, ATP synthesis in the catalytic domain of F(1) is coupled via a rotary mechanism of the central stalk subunits to proton translocation. Key component of the proton channel; it may play a direct role in the translocation of protons across the membrane. This chain is ATP synthase subunit a (ATP6), found in Patiria pectinifera (Starfish).